A 559-amino-acid polypeptide reads, in one-letter code: Aminopeptidase Q (559 aa).

The Cytoplasmic segment spans residues methionine 1–arginine 13. Residues glycine 14–alanine 34 form a helical; Signal-anchor for type II membrane protein membrane-spanning segment. The Lumenal portion of the chain corresponds to serine 35–histidine 559. N-linked (GlcNAc...) asparagine glycans are attached at residues asparagine 121 and asparagine 129. Glutamate 237 lines the substrate pocket. 3 N-linked (GlcNAc...) asparagine glycosylation sites follow: asparagine 258, asparagine 285, and asparagine 343. Glycine 376–asparagine 380 is a binding site for substrate. Residue histidine 412 coordinates Zn(2+). The Proton acceptor role is filled by glutamate 413. Zn(2+) contacts are provided by histidine 416 and glutamate 435.

Belongs to the peptidase M1 family. In terms of assembly, homodimer. It depends on Zn(2+) as a cofactor. Post-translationally, N-glycosylated.

The protein localises to the membrane. With respect to regulation, inhibited by bestatin. Its function is as follows. Metalloprotease which may be important for placentation by regulating biological activity of key peptides at the embryo-maternal interface. On synthetic substrates it shows a marked preference for Leu-4-methylcoumaryl-7-amide (Leu-MCA) over Met-MCA, Arg-LCA and Lys-LCA. Cleaves the N-terminal amino acid of several peptides such as angiotensin-3, kisspeptin-10 and endokinin C. The polypeptide is Aminopeptidase Q (Mus musculus (Mouse)).